Here is a 201-residue protein sequence, read N- to C-terminus: Dephospho-CoA kinase (201 aa).

The DPCK domain maps to 2 to 201 (MIGLTGGIAS…KRWKVIPEDQ (200 aa)). An ATP-binding site is contributed by 10 to 15 (ASGKSS).

It belongs to the CoaE family.

It is found in the cytoplasm. The enzyme catalyses 3'-dephospho-CoA + ATP = ADP + CoA + H(+). Its pathway is cofactor biosynthesis; coenzyme A biosynthesis; CoA from (R)-pantothenate: step 5/5. In terms of biological role, catalyzes the phosphorylation of the 3'-hydroxyl group of dephosphocoenzyme A to form coenzyme A. The protein is Dephospho-CoA kinase of Halalkalibacterium halodurans (strain ATCC BAA-125 / DSM 18197 / FERM 7344 / JCM 9153 / C-125) (Bacillus halodurans).